Here is a 147-residue protein sequence, read N- to C-terminus: UPF0306 protein YhbP (147 aa).

Belongs to the UPF0306 family.

The polypeptide is UPF0306 protein YhbP (Salmonella paratyphi A (strain AKU_12601)).